The following is a 562-amino-acid chain: NAD-dependent malic enzyme (562 aa).

Tyrosine 101 serves as the catalytic Proton donor. Arginine 154 is a binding site for NAD(+). The Proton acceptor role is filled by lysine 172. 3 residues coordinate a divalent metal cation: glutamate 243, aspartate 244, and aspartate 267. Residues aspartate 267 and asparagine 415 each coordinate NAD(+).

This sequence belongs to the malic enzymes family. As to quaternary structure, homotetramer. Requires Mg(2+) as cofactor. Mn(2+) is required as a cofactor.

The catalysed reaction is (S)-malate + NAD(+) = pyruvate + CO2 + NADH. It catalyses the reaction oxaloacetate + H(+) = pyruvate + CO2. This is NAD-dependent malic enzyme from Idiomarina loihiensis (strain ATCC BAA-735 / DSM 15497 / L2-TR).